We begin with the raw amino-acid sequence, 556 residues long: Phenylalanine--tRNA ligase beta subunit (556 aa).

The B5 domain maps to 269-345; it reads MEPEEVVYDV…MGYGYERIEP (77 aa). Residues Asp-323, Asp-329, Glu-332, and Glu-333 each contribute to the Mg(2+) site.

This sequence belongs to the phenylalanyl-tRNA synthetase beta subunit family. Type 2 subfamily. As to quaternary structure, tetramer of two alpha and two beta subunits. It depends on Mg(2+) as a cofactor.

Its subcellular location is the cytoplasm. The catalysed reaction is tRNA(Phe) + L-phenylalanine + ATP = L-phenylalanyl-tRNA(Phe) + AMP + diphosphate + H(+). This is Phenylalanine--tRNA ligase beta subunit from Thermofilum pendens (strain DSM 2475 / Hrk 5).